We begin with the raw amino-acid sequence, 474 residues long: Chromosomal replication initiator protein DnaA (474 aa).

Residues 1–91 (MSEELWQRCL…STRASTPAAS (91 aa)) form a domain I, interacts with DnaA modulators region. Residues 89–138 (AASYFNGSSSSSSNGPITTPAAAPAPRQPESDSRPQPTSLGGARKHRSNL) form a disordered region. A domain II region spans residues 91-136 (SYFNGSSSSSSNGPITTPAAAPAPRQPESDSRPQPTSLGGARKHRS). The span at 96-113 (SSSSSSNGPITTPAAAPA) shows a compositional bias: low complexity. Positions 137–354 (NLNTGFTFST…GALRRVIAHV (218 aa)) are domain III, AAA+ region. Positions 182, 184, 185, and 186 each coordinate ATP. The domain IV, binds dsDNA stretch occupies residues 355–474 (RFTGAQIDIG…YLNLLRTLTS (120 aa)).

Belongs to the DnaA family. As to quaternary structure, oligomerizes as a right-handed, spiral filament on DNA at oriC.

It localises to the cytoplasm. Plays an essential role in the initiation and regulation of chromosomal replication. ATP-DnaA binds to the origin of replication (oriC) to initiate formation of the DNA replication initiation complex once per cell cycle. Binds the DnaA box (a 9 base pair repeat at the origin) and separates the double-stranded (ds)DNA. Forms a right-handed helical filament on oriC DNA; dsDNA binds to the exterior of the filament while single-stranded (ss)DNA is stabiized in the filament's interior. The ATP-DnaA-oriC complex binds and stabilizes one strand of the AT-rich DNA unwinding element (DUE), permitting loading of DNA polymerase. After initiation quickly degrades to an ADP-DnaA complex that is not apt for DNA replication. Binds acidic phospholipids. This Alcanivorax borkumensis (strain ATCC 700651 / DSM 11573 / NCIMB 13689 / SK2) protein is Chromosomal replication initiator protein DnaA.